The chain runs to 432 residues: Homogentisate 1,2-dioxygenase (432 aa).

H286 (proton acceptor) is an active-site residue. 2 residues coordinate Fe cation: H329 and E335. Residues Y344 and H365 each contribute to the homogentisate site. Fe cation is bound at residue H365.

It belongs to the homogentisate dioxygenase family. Hexamer; dimer of trimers. It depends on Fe cation as a cofactor.

It carries out the reaction homogentisate + O2 = 4-maleylacetoacetate + H(+). It functions in the pathway amino-acid degradation; L-phenylalanine degradation; acetoacetate and fumarate from L-phenylalanine: step 4/6. Functionally, involved in the catabolism of homogentisate (2,5-dihydroxyphenylacetate or 2,5-OH-PhAc), a central intermediate in the degradation of phenylalanine and tyrosine. Catalyzes the oxidative ring cleavage of the aromatic ring of homogentisate to yield maleylacetoacetate. The sequence is that of Homogentisate 1,2-dioxygenase from Bordetella bronchiseptica (strain ATCC BAA-588 / NCTC 13252 / RB50) (Alcaligenes bronchisepticus).